We begin with the raw amino-acid sequence, 446 residues long: NADH-ubiquinone oxidoreductase chain 4 (446 aa).

Transmembrane regions (helical) follow at residues 4–24 (IIFF…YWMV), 56–76 (MLSY…LLAS), 93–113 (IIIL…FMFY), 114–134 (LFFE…GYQP), 139–159 (AGLY…IGIF), 182–202 (LLYF…LVHL), 218–238 (ILAG…ISFL), 245–265 (YSFV…LVCL), 272–292 (ALIA…LLTM), 297–317 (LCGS…LFCL), 330–350 (MLIN…WFLL), 373–393 (IVSW…FSAA), and 426–446 (LLHW…MLWL).

The protein belongs to the complex I subunit 4 family.

Its subcellular location is the mitochondrion membrane. It carries out the reaction a ubiquinone + NADH + 5 H(+)(in) = a ubiquinol + NAD(+) + 4 H(+)(out). Functionally, core subunit of the mitochondrial membrane respiratory chain NADH dehydrogenase (Complex I) that is believed to belong to the minimal assembly required for catalysis. Complex I functions in the transfer of electrons from NADH to the respiratory chain. The immediate electron acceptor for the enzyme is believed to be ubiquinone. This chain is NADH-ubiquinone oxidoreductase chain 4 (mt:ND4), found in Drosophila melanogaster (Fruit fly).